A 341-amino-acid polypeptide reads, in one-letter code: Pectate trisaccharide-lyase (341 aa).

A signal peptide spans 1–27; sequence MKKLISIIFIFVLGVVGSLTAAVSAEA. The propeptide occupies 28 to 39; that stretch reads ASALNSGKVNPL. PbH1 repeat units follow at residues 131 to 156 and 158 to 186; these read ANNIIIRNLKIHEVASGDKDAIGIEG and SKNIWVDHNELYHSLNVDKDYYDGLFDVK. Ca(2+)-binding residues include D150, D180, and D184. R233 is a catalytic residue. PbH1 repeat units lie at residues 262-283 and 287-322; these read GARIRIENNLFENAKDPIVSWY and PGYWHVSNNKFVNSRGSMPTTSTTTYNPPYSYSLDN.

This sequence belongs to the polysaccharide lyase 1 family. The cofactor is Ca(2+).

It localises to the secreted. It carries out the reaction eliminative cleavage of unsaturated trigalacturonate as the major product from the reducing end of polygalacturonic acid/pectate.. Functionally, cleaves unsaturated oligo-galacturonides from pectin. The major product is trigalacturonate; digalacturonate and tetragalacturonate are also produced. Activity on methylated pectins decreases with an increasing degree of methylation. The sequence is that of Pectate trisaccharide-lyase from Bacillus licheniformis (strain ATCC 14580 / DSM 13 / JCM 2505 / CCUG 7422 / NBRC 12200 / NCIMB 9375 / NCTC 10341 / NRRL NRS-1264 / Gibson 46).